Here is a 407-residue protein sequence, read N- to C-terminus: Phosphopentomutase (407 aa).

6 residues coordinate Mn(2+): Asp-10, Asp-306, His-311, Asp-347, His-348, and His-359.

It belongs to the phosphopentomutase family. It depends on Mn(2+) as a cofactor.

The protein localises to the cytoplasm. It catalyses the reaction 2-deoxy-alpha-D-ribose 1-phosphate = 2-deoxy-D-ribose 5-phosphate. The catalysed reaction is alpha-D-ribose 1-phosphate = D-ribose 5-phosphate. It functions in the pathway carbohydrate degradation; 2-deoxy-D-ribose 1-phosphate degradation; D-glyceraldehyde 3-phosphate and acetaldehyde from 2-deoxy-alpha-D-ribose 1-phosphate: step 1/2. Isomerase that catalyzes the conversion of deoxy-ribose 1-phosphate (dRib-1-P) and ribose 1-phosphate (Rib-1-P) to deoxy-ribose 5-phosphate (dRib-5-P) and ribose 5-phosphate (Rib-5-P), respectively. This chain is Phosphopentomutase, found in Buchnera aphidicola subsp. Acyrthosiphon pisum (strain APS) (Acyrthosiphon pisum symbiotic bacterium).